The following is a 576-amino-acid chain: NADH-quinone oxidoreductase subunit C/D (576 aa).

An NADH dehydrogenase I subunit C region spans residues 1–176 (MAWISLEKAK…NLEGLFNYDR (176 aa)). The interval 200–576 (SQIVLNWGPL…IDPVVGETDR (377 aa)) is NADH dehydrogenase I subunit D.

The protein in the N-terminal section; belongs to the complex I 30 kDa subunit family. This sequence in the C-terminal section; belongs to the complex I 49 kDa subunit family. In terms of assembly, NDH-1 is composed of 13 different subunits. Subunits NuoB, CD, E, F, and G constitute the peripheral sector of the complex.

Its subcellular location is the cell inner membrane. The catalysed reaction is a quinone + NADH + 5 H(+)(in) = a quinol + NAD(+) + 4 H(+)(out). NDH-1 shuttles electrons from NADH, via FMN and iron-sulfur (Fe-S) centers, to quinones in the respiratory chain. The immediate electron acceptor for the enzyme in this species is believed to be ubiquinone. Couples the redox reaction to proton translocation (for every two electrons transferred, four hydrogen ions are translocated across the cytoplasmic membrane), and thus conserves the redox energy in a proton gradient. This Sulfurihydrogenibium sp. (strain YO3AOP1) protein is NADH-quinone oxidoreductase subunit C/D.